We begin with the raw amino-acid sequence, 107 residues long: Large ribosomal subunit protein uL24 (107 aa).

This sequence belongs to the universal ribosomal protein uL24 family. Part of the 50S ribosomal subunit.

In terms of biological role, one of two assembly initiator proteins, it binds directly to the 5'-end of the 23S rRNA, where it nucleates assembly of the 50S subunit. One of the proteins that surrounds the polypeptide exit tunnel on the outside of the subunit. This Streptomyces avermitilis (strain ATCC 31267 / DSM 46492 / JCM 5070 / NBRC 14893 / NCIMB 12804 / NRRL 8165 / MA-4680) protein is Large ribosomal subunit protein uL24.